Reading from the N-terminus, the 474-residue chain is tRNA-2-methylthio-N(6)-dimethylallyladenosine synthase (474 aa).

The MTTase N-terminal domain maps to 3–120; the sequence is KKLHIKTWGC…LPEMIDQIEA (118 aa). 6 residues coordinate [4Fe-4S] cluster: cysteine 12, cysteine 49, cysteine 83, cysteine 157, cysteine 161, and cysteine 164. One can recognise a Radical SAM core domain in the interval 143–375; sequence RADGPSAFVS…QDRITQQAMR (233 aa). The 64-residue stretch at 378–441 folds into the TRAM domain; sequence RQMLGTVQRI…TNSLRGNFIR (64 aa).

Belongs to the methylthiotransferase family. MiaB subfamily. Monomer. [4Fe-4S] cluster is required as a cofactor.

The protein resides in the cytoplasm. It carries out the reaction N(6)-dimethylallyladenosine(37) in tRNA + (sulfur carrier)-SH + AH2 + 2 S-adenosyl-L-methionine = 2-methylsulfanyl-N(6)-dimethylallyladenosine(37) in tRNA + (sulfur carrier)-H + 5'-deoxyadenosine + L-methionine + A + S-adenosyl-L-homocysteine + 2 H(+). Catalyzes the methylthiolation of N6-(dimethylallyl)adenosine (i(6)A), leading to the formation of 2-methylthio-N6-(dimethylallyl)adenosine (ms(2)i(6)A) at position 37 in tRNAs that read codons beginning with uridine. This is tRNA-2-methylthio-N(6)-dimethylallyladenosine synthase from Shewanella woodyi (strain ATCC 51908 / MS32).